The sequence spans 191 residues: UPF0149 protein VV2847 (191 aa).

It belongs to the UPF0149 family.

In Vibrio vulnificus (strain YJ016), this protein is UPF0149 protein VV2847.